A 510-amino-acid polypeptide reads, in one-letter code: Putative serine protease K12H4.7 (510 aa).

The signal sequence occupies residues 1–19 (MKTLLAVLLAACVLTQVLS). Residue Ser-187 is the Charge relay system of the active site. An N-linked (GlcNAc...) asparagine glycan is attached at Asn-234. Asp-452 acts as the Charge relay system in catalysis. A glycan (N-linked (GlcNAc...) asparagine) is linked at Asn-473. Residue His-477 is the Charge relay system of the active site.

This sequence belongs to the peptidase S28 family.

This is Putative serine protease K12H4.7 from Caenorhabditis elegans.